The following is a 335-amino-acid chain: MKLATPRWWYLREGAPSPITRALLTPLSWIWAAQTARRIARTTPRGADCAVICVGNFTVGGVGKTPIVRELLLTLTKRGRRAHGLARGYGGKLKGPVRVEPSRHTVAEVGDEPLMLAQDFPMWVSRDRVLGARKAAASGAEVVVMDDGHQNPDLRKTLSLVVVDGETREDEWPFGDGRVFPAGPMREPLNVSLGRTDAVIVLLPADLPEADPRLLALFGDTPVLIARLEPAAPPPKGRQVGFAGIGKPWKVERALKAAGCHLVDFAPYPDHGQYDEATLNFLWERAQTYSAGLVTTEKDWVRLPQAWRDRVTPWPVRARFEDEGALGALLESVGL.

An ATP-binding site is contributed by 58–65 (TVGGVGKT).

This sequence belongs to the LpxK family.

The enzyme catalyses a lipid A disaccharide + ATP = a lipid IVA + ADP + H(+). It functions in the pathway glycolipid biosynthesis; lipid IV(A) biosynthesis; lipid IV(A) from (3R)-3-hydroxytetradecanoyl-[acyl-carrier-protein] and UDP-N-acetyl-alpha-D-glucosamine: step 6/6. Transfers the gamma-phosphate of ATP to the 4'-position of a tetraacyldisaccharide 1-phosphate intermediate (termed DS-1-P) to form tetraacyldisaccharide 1,4'-bis-phosphate (lipid IVA). In Caulobacter sp. (strain K31), this protein is Tetraacyldisaccharide 4'-kinase.